A 270-amino-acid chain; its full sequence is Sorting nexin-11 (270 aa).

A PX domain is found at 16 to 132 (VITVRVQDPR…HLFLQSQLSV (117 aa)). The a 1,2-diacyl-sn-glycero-3-phospho-(1D-myo-inositol-3-phosphate) site is built by R59, K85, and R99. The tract at residues 135–139 (IEACV) is important for membrane trafficking. Over residues 168-177 (GSSHLAEGDQ) the composition is skewed to basic and acidic residues. Disordered stretches follow at residues 168 to 244 (GSSH…LSAS) and 251 to 270 (LGGG…VLEK). A compositionally biased stretch (pro residues) spans 218 to 227 (LESPTLPPTS).

This sequence belongs to the sorting nexin family. As to quaternary structure, monomer. Interacts with TRPV3; this interaction promotes TRPV3 trafficking from the cell membrane to lysosome for degradation.

Its subcellular location is the cell membrane. The protein localises to the endosome. It localises to the cytoplasm. Phosphoinositide-binding protein involved in protein sorting and membrane trafficking in endosomes. Regulates the levels of TRPV3 by promoting its trafficking from the cell membrane to lysosome for degradation. The protein is Sorting nexin-11 (SNX11) of Bos taurus (Bovine).